We begin with the raw amino-acid sequence, 888 residues long: Leucine--tRNA ligase (888 aa).

The short motif at 42–52 (PYPSGKLHMGH) is the 'HIGH' region element. The 'KMSKS' region motif lies at 640 to 644 (TMSKS). ATP is bound at residue K643.

The protein belongs to the class-I aminoacyl-tRNA synthetase family.

The protein resides in the cytoplasm. It catalyses the reaction tRNA(Leu) + L-leucine + ATP = L-leucyl-tRNA(Leu) + AMP + diphosphate. This is Leucine--tRNA ligase from Polaromonas naphthalenivorans (strain CJ2).